The following is a 297-amino-acid chain: Probable porphobilinogen deaminase (297 aa).

At C241 the chain carries S-(dipyrrolylmethanemethyl)cysteine.

The protein belongs to the HMBS family. Dipyrromethane is required as a cofactor.

It catalyses the reaction 4 porphobilinogen + H2O = hydroxymethylbilane + 4 NH4(+). Its pathway is porphyrin-containing compound metabolism; protoporphyrin-IX biosynthesis; coproporphyrinogen-III from 5-aminolevulinate: step 2/4. Its function is as follows. Tetrapolymerization of the monopyrrole PBG into the hydroxymethylbilane pre-uroporphyrinogen in several discrete steps. The polypeptide is Probable porphobilinogen deaminase (Pyrobaculum arsenaticum (strain DSM 13514 / JCM 11321 / PZ6)).